The sequence spans 477 residues: Ribulose bisphosphate carboxylase large chain (477 aa).

Residues 1 to 2 (MS) constitute a propeptide that is removed on maturation. Proline 3 is modified (N-acetylproline). 2 residues coordinate substrate: asparagine 123 and threonine 173. Lysine 175 (proton acceptor) is an active-site residue. Lysine 177 contributes to the substrate binding site. 3 residues coordinate Mg(2+): lysine 201, aspartate 203, and glutamate 204. Lysine 201 carries the post-translational modification N6-carboxylysine. Residue histidine 294 is the Proton acceptor of the active site. Residues arginine 295, histidine 327, and serine 379 each contribute to the substrate site.

This sequence belongs to the RuBisCO large chain family. Type I subfamily. Heterohexadecamer of 8 large chains and 8 small chains; disulfide-linked. The disulfide link is formed within the large subunit homodimers. It depends on Mg(2+) as a cofactor. The disulfide bond which can form between Cys-247 in the large chain dimeric partners within the hexadecamer appears to be associated with oxidative stress and protein turnover.

The protein resides in the plastid. It localises to the chloroplast. It catalyses the reaction 2 (2R)-3-phosphoglycerate + 2 H(+) = D-ribulose 1,5-bisphosphate + CO2 + H2O. The enzyme catalyses D-ribulose 1,5-bisphosphate + O2 = 2-phosphoglycolate + (2R)-3-phosphoglycerate + 2 H(+). In terms of biological role, ruBisCO catalyzes two reactions: the carboxylation of D-ribulose 1,5-bisphosphate, the primary event in carbon dioxide fixation, as well as the oxidative fragmentation of the pentose substrate in the photorespiration process. Both reactions occur simultaneously and in competition at the same active site. This chain is Ribulose bisphosphate carboxylase large chain (rbcL), found in Triticum aestivum (Wheat).